Consider the following 291-residue polypeptide: Nitrogenase iron protein 1 (291 aa).

10–17 contributes to the ATP binding site; that stretch reads GKGGIGKS. Cys-98 serves as a coordination point for [4Fe-4S] cluster. ADP-ribosylarginine; by dinitrogenase reductase ADP-ribosyltransferase is present on Arg-101. Residue Cys-133 coordinates [4Fe-4S] cluster.

It belongs to the NifH/BchL/ChlL family. As to quaternary structure, homodimer. [4Fe-4S] cluster serves as cofactor. In terms of processing, the reversible ADP-ribosylation of Arg-101 inactivates the nitrogenase reductase and regulates nitrogenase activity.

It catalyses the reaction N2 + 8 reduced [2Fe-2S]-[ferredoxin] + 16 ATP + 16 H2O = H2 + 8 oxidized [2Fe-2S]-[ferredoxin] + 2 NH4(+) + 16 ADP + 16 phosphate + 6 H(+). Functionally, the key enzymatic reactions in nitrogen fixation are catalyzed by the nitrogenase complex, which has 2 components: the iron protein (component 2) and a component 1 which is either a molybdenum-iron protein, a vanadium-iron, or an iron-iron protein. The chain is Nitrogenase iron protein 1 (nifH1) from Azotobacter chroococcum mcd 1.